The chain runs to 891 residues: Protein translocase subunit SecA 1 (891 aa).

ATP is bound by residues glutamine 85, 103 to 107, and aspartate 491; that span reads GEGKT. Zn(2+) contacts are provided by cysteine 877, cysteine 879, cysteine 888, and cysteine 889.

Belongs to the SecA family. In terms of assembly, monomer and homodimer. Part of the essential Sec protein translocation apparatus which comprises SecA, SecYEG and auxiliary proteins SecDF. Other proteins may also be involved. The cofactor is Zn(2+).

The protein resides in the cell membrane. The protein localises to the cytoplasm. It catalyses the reaction ATP + H2O + cellular proteinSide 1 = ADP + phosphate + cellular proteinSide 2.. Functionally, part of the Sec protein translocase complex. Interacts with the SecYEG preprotein conducting channel. Has a central role in coupling the hydrolysis of ATP to the transfer of proteins into and across the cell membrane, serving as an ATP-driven molecular motor driving the stepwise translocation of polypeptide chains across the membrane. The polypeptide is Protein translocase subunit SecA 1 (Clostridioides difficile (strain 630) (Peptoclostridium difficile)).